The following is a 1277-amino-acid chain: Protein FAM83H (1277 aa).

The span at 1–12 (MARRSQSSSQGE) shows a compositional bias: polar residues. Disordered regions lie at residues 1 to 20 (MARR…PNYL), 67 to 98 (SLQR…SGTY), 717 to 756 (FGST…TNPL), 772 to 805 (SKLE…TGRT), 971 to 1018 (EQTS…NSAF), 1070 to 1130 (KAEE…SRLS), 1158 to 1225 (QKNR…RDIL), and 1247 to 1266 (KKDE…AGKI). Residues 724–750 (SVEKAKENPPAEKEKEEGLLSRHDSFR) are compositionally biased toward basic and acidic residues. Composition is skewed to polar residues over residues 777–805 (HTST…TGRT), 971–982 (EQTSSTIQTIGN), 993–1015 (SGPT…TRPN), and 1112–1130 (KSLS…SRLS). Low complexity predominate over residues 1204-1215 (SFLSRSRFSRPS). A compositionally biased stretch (basic and acidic residues) spans 1247–1263 (KKDEQPSHADDNDDKKA).

It belongs to the FAM83 family.

It is found in the cytoplasm. Its subcellular location is the cytoskeleton. Its function is as follows. May play a role in keratin cytoskeleton disassembly. The chain is Protein FAM83H from Xenopus tropicalis (Western clawed frog).